Reading from the N-terminus, the 996-residue chain is GPI ethanolamine phosphate transferase 1 (996 aa).

Topologically, residues Met1–Arg8 are cytoplasmic. Residues Phe9 to Phe29 traverse the membrane as a helical segment. The Lumenal portion of the chain corresponds to Val30 to Arg463. N-linked (GlcNAc...) asparagine glycans are attached at residues Asn47, Asn147, and Asn210. A helical transmembrane segment spans residues Ala464–Leu484. Residues His485–Arg495 are Cytoplasmic-facing. A helical transmembrane segment spans residues Thr496–Ile516. At Ser517–Lys518 the chain is on the lumenal side. Residues Ser519–Ala539 traverse the membrane as a helical segment. Residues His540–Ser560 lie on the Cytoplasmic side of the membrane. A helical transmembrane segment spans residues Val561–Gly581. The Lumenal portion of the chain corresponds to Tyr582–Glu586. A helical membrane pass occupies residues Ile587–Leu607. At Lys608 to Ala612 the chain is on the cytoplasmic side. Residues Leu613–Met633 traverse the membrane as a helical segment. The Lumenal segment spans residues Lys634 to Asn637. The chain crosses the membrane as a helical span at residues Val638 to Phe658. Over Glu659–Ser681 the chain is Cytoplasmic. A helical transmembrane segment spans residues Leu682–Leu702. Over Ser703–Gln715 the chain is Lumenal. Residues Ile716 to Leu734 form a helical membrane-spanning segment. Topologically, residues Arg735 to Thr754 are cytoplasmic. The chain crosses the membrane as a helical span at residues Phe755 to Val775. Residues Ser776 to Arg822 are Lumenal-facing. Residues Val823–Ser843 traverse the membrane as a helical segment. Residues Val844–Gly865 are Cytoplasmic-facing. A helical transmembrane segment spans residues Ala866–Leu886. The Lumenal portion of the chain corresponds to Asn887–Ser895. Residues Ala896 to Val916 form a helical membrane-spanning segment. Over Lys917–Phe932 the chain is Cytoplasmic. A helical transmembrane segment spans residues Val933–Ile953. At Ala954–Ser996 the chain is on the lumenal side.

It belongs to the PIGG/PIGN/PIGO family. PIGN subfamily.

It is found in the endoplasmic reticulum membrane. The protein operates within glycolipid biosynthesis; glycosylphosphatidylinositol-anchor biosynthesis. Functionally, ethanolamine phosphate transferase involved in glycosylphosphatidylinositol-anchor biosynthesis. Transfers ethanolamine phosphate to the first alpha-1,4-linked mannose of the glycosylphosphatidylinositol precursor of GPI-anchor. The polypeptide is GPI ethanolamine phosphate transferase 1 (mcd-4) (Neurospora crassa (strain ATCC 24698 / 74-OR23-1A / CBS 708.71 / DSM 1257 / FGSC 987)).